Here is a 265-residue protein sequence, read N- to C-terminus: 14-3-3-like protein GF14 nu (265 aa).

Serine 67, serine 109, and serine 190 each carry phosphoserine. Phosphothreonine is present on threonine 211. A disordered region spans residues alanine 242–glutamine 265. The segment covering aspartate 245–glutamine 265 has biased composition (basic and acidic residues).

The protein belongs to the 14-3-3 family. As to quaternary structure, component of the SERK1 signaling complex, composed of KAPP, CDC48A, GRF6 or GRF7, SERK1, SERK2, SERK3/BAK1 and BRI1. Interacts with DREB1A and DREB1B in the nucleus. Interacts with CINV1.

The protein resides in the nucleus. It localises to the cytoplasm. Its function is as follows. Is associated with a DNA binding complex that binds to the G box, a well-characterized cis-acting DNA regulatory element found in plant genes. The polypeptide is 14-3-3-like protein GF14 nu (GRF7) (Arabidopsis thaliana (Mouse-ear cress)).